Consider the following 207-residue polypeptide: Outer-membrane lipoprotein LolB (207 aa).

An N-terminal signal peptide occupies residues 1–21 (MPLPDFRLIRLLPLASLVLTA). The N-palmitoyl cysteine moiety is linked to residue Cys-22. Cys-22 carries the S-diacylglycerol cysteine lipid modification.

The protein belongs to the LolB family. Monomer.

The protein localises to the cell outer membrane. Its function is as follows. Plays a critical role in the incorporation of lipoproteins in the outer membrane after they are released by the LolA protein. In Escherichia fergusonii (strain ATCC 35469 / DSM 13698 / CCUG 18766 / IAM 14443 / JCM 21226 / LMG 7866 / NBRC 102419 / NCTC 12128 / CDC 0568-73), this protein is Outer-membrane lipoprotein LolB.